Reading from the N-terminus, the 317-residue chain is tRNA dimethylallyltransferase (317 aa).

14–21 (GPTAVGKT) lines the ATP pocket. 16 to 21 (TAVGKT) is a binding site for substrate. The segment at 39–42 (DSMQ) is interaction with substrate tRNA.

It belongs to the IPP transferase family. Monomer. The cofactor is Mg(2+).

The enzyme catalyses adenosine(37) in tRNA + dimethylallyl diphosphate = N(6)-dimethylallyladenosine(37) in tRNA + diphosphate. Its function is as follows. Catalyzes the transfer of a dimethylallyl group onto the adenine at position 37 in tRNAs that read codons beginning with uridine, leading to the formation of N6-(dimethylallyl)adenosine (i(6)A). This Bacillus mycoides (strain KBAB4) (Bacillus weihenstephanensis) protein is tRNA dimethylallyltransferase.